A 740-amino-acid chain; its full sequence is Ion-translocating oxidoreductase complex subunit C (740 aa).

4Fe-4S ferredoxin-type domains are found at residues 369–397 (GEPQ…QQLY) and 407–436 (KATT…VQYF). [4Fe-4S] cluster-binding residues include cysteine 377, cysteine 380, cysteine 383, cysteine 387, cysteine 416, cysteine 419, cysteine 422, and cysteine 426. The tract at residues 602–714 (KLEQQQANAE…NAEPEEQIDP (113 aa)) is disordered. Over residues 605 to 615 (QQQANAEPEQQ) the composition is skewed to low complexity.

The protein belongs to the 4Fe4S bacterial-type ferredoxin family. RnfC subfamily. The complex is composed of six subunits: RsxA, RsxB, RsxC, RsxD, RsxE and RsxG. [4Fe-4S] cluster is required as a cofactor.

It localises to the cell inner membrane. In terms of biological role, part of a membrane-bound complex that couples electron transfer with translocation of ions across the membrane. Required to maintain the reduced state of SoxR. This chain is Ion-translocating oxidoreductase complex subunit C, found in Escherichia coli O17:K52:H18 (strain UMN026 / ExPEC).